A 347-amino-acid chain; its full sequence is S-adenosylmethionine:tRNA ribosyltransferase-isomerase (347 aa).

Belongs to the QueA family. Monomer.

Its subcellular location is the cytoplasm. The enzyme catalyses 7-aminomethyl-7-carbaguanosine(34) in tRNA + S-adenosyl-L-methionine = epoxyqueuosine(34) in tRNA + adenine + L-methionine + 2 H(+). It functions in the pathway tRNA modification; tRNA-queuosine biosynthesis. In terms of biological role, transfers and isomerizes the ribose moiety from AdoMet to the 7-aminomethyl group of 7-deazaguanine (preQ1-tRNA) to give epoxyqueuosine (oQ-tRNA). This chain is S-adenosylmethionine:tRNA ribosyltransferase-isomerase, found in Pseudomonas aeruginosa (strain ATCC 15692 / DSM 22644 / CIP 104116 / JCM 14847 / LMG 12228 / 1C / PRS 101 / PAO1).